Reading from the N-terminus, the 293-residue chain is MDIALALKAVILGIVEGLTEFLPISSTGHLILAGQLLDFNDEKGKIFEIVIQFGAILAVCWEFRQRIGTVISGLASDVKSQRFAVNVIVATIPAIVLALVFGKWIKAHLFNPITVATAFIIGGVVILLAEWREARRGTVSAPQGNALLEAAKAGAPRIESVDDLNWRDALKVGLAQCFALVPGTSRSGATIIGGMLFGLSRQVATEFSFFLAIPVIFGATVYELYKARALLSADDLGIFAVGFVFAFLSAFLCVRWLLRFVATHDFKPFAWYRIAFGIIVLLTAWTGVISWHA.

The next 8 helical transmembrane spans lie at 3–23 (IALALKAVILGIVEGLTEFLP), 43–63 (KGKIFEIVIQFGAILAVCWEF), 85–105 (VNVIVATIPAIVLALVFGKWI), 109–129 (LFNPITVATAFIIGGVVILLA), 178–198 (FALVPGTSRSGATIIGGMLFG), 203–223 (VATEFSFFLAIPVIFGATVYE), 238–258 (IFAVGFVFAFLSAFLCVRWLL), and 269–289 (FAWYRIAFGIIVLLTAWTGVI).

Belongs to the UppP family.

The protein resides in the cell inner membrane. The enzyme catalyses di-trans,octa-cis-undecaprenyl diphosphate + H2O = di-trans,octa-cis-undecaprenyl phosphate + phosphate + H(+). Its function is as follows. Catalyzes the dephosphorylation of undecaprenyl diphosphate (UPP). Confers resistance to bacitracin. This chain is Undecaprenyl-diphosphatase, found in Cupriavidus metallidurans (strain ATCC 43123 / DSM 2839 / NBRC 102507 / CH34) (Ralstonia metallidurans).